A 472-amino-acid polypeptide reads, in one-letter code: 23S rRNA (uracil(1939)-C(5))-methyltransferase RlmD (472 aa).

Residues 1 to 15 are compositionally biased toward basic residues; that stretch reads MSRTAPHRRAPKRYK. The interval 1-23 is disordered; that stretch reads MSRTAPHRRAPKRYKTPPPAPAH. Residues 23–87 enclose the TRAM domain; sequence HVVTGNEPVI…PKFEQAEVVQ (65 aa). Residues Cys-100, Cys-106, Cys-109, and Cys-188 each contribute to the [4Fe-4S] cluster site. Residues Gln-296, Phe-325, Asn-330, Glu-346, Asn-374, and Asp-395 each coordinate S-adenosyl-L-methionine. Residue Cys-428 is the Nucleophile of the active site.

It belongs to the class I-like SAM-binding methyltransferase superfamily. RNA M5U methyltransferase family. RlmD subfamily.

It carries out the reaction uridine(1939) in 23S rRNA + S-adenosyl-L-methionine = 5-methyluridine(1939) in 23S rRNA + S-adenosyl-L-homocysteine + H(+). Its function is as follows. Catalyzes the formation of 5-methyl-uridine at position 1939 (m5U1939) in 23S rRNA. The chain is 23S rRNA (uracil(1939)-C(5))-methyltransferase RlmD from Paraburkholderia xenovorans (strain LB400).